Here is a 427-residue protein sequence, read N- to C-terminus: Enolase (427 aa).

Glutamine 163 provides a ligand contact to (2R)-2-phosphoglycerate. Residue glutamate 205 is the Proton donor of the active site. Residues aspartate 242, glutamate 283, and aspartate 310 each coordinate Mg(2+). Residues lysine 335, arginine 364, serine 365, and lysine 386 each contribute to the (2R)-2-phosphoglycerate site. Lysine 335 functions as the Proton acceptor in the catalytic mechanism.

The protein belongs to the enolase family. The cofactor is Mg(2+).

The protein localises to the cytoplasm. It localises to the secreted. The protein resides in the cell surface. The catalysed reaction is (2R)-2-phosphoglycerate = phosphoenolpyruvate + H2O. It functions in the pathway carbohydrate degradation; glycolysis; pyruvate from D-glyceraldehyde 3-phosphate: step 4/5. Functionally, catalyzes the reversible conversion of 2-phosphoglycerate (2-PG) into phosphoenolpyruvate (PEP). It is essential for the degradation of carbohydrates via glycolysis. The polypeptide is Enolase (Salinispora arenicola (strain CNS-205)).